A 591-amino-acid polypeptide reads, in one-letter code: Transcriptional regulator PUL4 (591 aa).

Positions 3-29 (CLECKKRKQKCDGQKPCRRCTKLNVKC) form a DNA-binding region, zn(2)-C6 fungal-type.

Its subcellular location is the nucleus. Its function is as follows. Transcription factor involved in regulation of the PUL gene cluster that mediates the formation of pulcherrimin, a red iron-containing pigment composed of two cyclized and modified leucine molecules that acts as a siderophore, a chelator that binds iron outside the cell for subsequent uptake. The polypeptide is Transcriptional regulator PUL4 (Kluyveromyces lactis (strain ATCC 8585 / CBS 2359 / DSM 70799 / NBRC 1267 / NRRL Y-1140 / WM37) (Yeast)).